The chain runs to 436 residues: Cold sensitive U2 snRNA suppressor 1 (436 aa).

The span at 1–10 shows a compositional bias: basic residues; it reads MARTKSRKRS. Residues 1–22 form a disordered region; the sequence is MARTKSRKRSGNNQNKNASVVN. Over residues 12–22 the composition is skewed to low complexity; that stretch reads NNQNKNASVVN. Phosphothreonine is present on residues Thr104 and Thr112. A Phosphoserine modification is found at Ser114. The interval 374–436 is disordered; it reads EFENSKEDTQ…SEKQLYTVLK (63 aa). Residues 389 to 408 are compositionally biased toward basic and acidic residues; the sequence is GRQDDKIDDEVEHKLDHFQE.

It to mammalian SAP 145. Some, to C.elegans ZK632.11. In terms of assembly, belongs to the CWC complex (or CEF1-associated complex), a spliceosome sub-complex reminiscent of a late-stage spliceosome composed of the U2, U5 and U6 snRNAs and at least BUD13, BUD31, BRR2, CDC40, CEF1, CLF1, CUS1, CWC2, CWC15, CWC21, CWC22, CWC23, CWC24, CWC25, CWC27, ECM2, HSH155, IST3, ISY1, LEA1, MSL1, NTC20, PRP8, PRP9, PRP11, PRP19, PRP21, PRP22, PRP45, PRP46, SLU7, SMB1, SMD1, SMD2, SMD3, SMX2, SMX3, SNT309, SNU114, SPP2, SYF1, SYF2, RSE1 and YJU2. Interacts with RDS3.

Its subcellular location is the nucleus. Essential splicing protein required for U2 snRNP binding to pre-mRNA during spliceosome assembly. This Saccharomyces cerevisiae (strain ATCC 204508 / S288c) (Baker's yeast) protein is Cold sensitive U2 snRNA suppressor 1 (CUS1).